The primary structure comprises 172 residues: Mesogenin-1 (172 aa).

The tract at residues 1 to 69 is disordered; sequence METLHHPLVK…SPYSSSSHTQ (69 aa). The segment covering 18 to 29 has biased composition (polar residues); sequence SSDSEPNSSCMA. The span at 42 to 66 shows a compositional bias: low complexity; the sequence is SLSQTPSPQSLSPAVSYESPYSSSS. The bHLH domain occupies 108-162; that stretch reads QRRRKASEREKLRMRAIAEALHTLRNNLPPMYSQGRQPLTKIQTLKCTINYISEL.

It is found in the nucleus. Involved in specifying the paraxial, but not dorsal, mesoderm. May regulate the expression of T-box transcription factors required for mesoderm formation and differentiation, such as brachyury T, wnt8, vegt and eomes. The polypeptide is Mesogenin-1 (msgn1) (Xenopus tropicalis (Western clawed frog)).